A 56-amino-acid polypeptide reads, in one-letter code: MAVQQNKKSRSKRGMRRSHDALSTAQLSVDATSGEVHMRHNVTADGFYRGKKVINK.

Residues 1 to 36 (MAVQQNKKSRSKRGMRRSHDALSTAQLSVDATSGEV) are disordered. Residues 7 to 16 (KKSRSKRGMR) are compositionally biased toward basic residues. Over residues 21–31 (ALSTAQLSVDA) the composition is skewed to polar residues.

It belongs to the bacterial ribosomal protein bL32 family.

The polypeptide is Large ribosomal subunit protein bL32 (Shewanella oneidensis (strain ATCC 700550 / JCM 31522 / CIP 106686 / LMG 19005 / NCIMB 14063 / MR-1)).